Consider the following 455-residue polypeptide: Golgi pH regulator (455 aa).

5 helical membrane passes run 5-25 (IDSS…WLFF), 46-66 (VTFA…LGVL), 79-99 (LCVI…YFIV), 114-134 (CLLW…FPIL), and 150-170 (VGVI…VNCP). N-linked (GlcNAc...) asparagine glycosylation is found at Asn-180 and Asn-243. The next 4 membrane-spanning stretches (helical) occupy residues 290–310 (GYFF…NIVF), 343–363 (ISFI…LITL), 378–398 (VIVL…VLLI), and 425–445 (WFDV…YLAH).

This sequence belongs to the Golgi pH regulator (TC 1.A.38) family. As to quaternary structure, homotrimer. Interacts with RABL3; the interaction stabilizes GPR89A.

The protein localises to the golgi apparatus membrane. The enzyme catalyses iodide(out) = iodide(in). It carries out the reaction chloride(in) = chloride(out). The catalysed reaction is bromide(in) = bromide(out). It catalyses the reaction fluoride(in) = fluoride(out). In terms of biological role, voltage-gated channel that enables the transfer of monoatomic anions such as iodide, chloride, bromide and fluoride which may function in counter-ion conductance and participates in Golgi acidification. Plays a role in lymphocyte development, probably by acting as a RABL3 effector in hematopoietic cells. The sequence is that of Golgi pH regulator from Bos taurus (Bovine).